The following is a 397-amino-acid chain: Cysteine desulfurase (397 aa).

Pyridoxal 5'-phosphate-binding positions include asparagine 148, glutamine 176, and serine 196–histidine 198. Lysine 199 carries the N6-(pyridoxal phosphate)lysine modification. Residue threonine 234 participates in pyridoxal 5'-phosphate binding. Residue cysteine 321 is the Cysteine persulfide intermediate of the active site. Residue cysteine 321 participates in [2Fe-2S] cluster binding.

This sequence belongs to the class-V pyridoxal-phosphate-dependent aminotransferase family. NifS/IscS subfamily. As to quaternary structure, homodimer. Pyridoxal 5'-phosphate serves as cofactor.

The catalysed reaction is (sulfur carrier)-H + L-cysteine = (sulfur carrier)-SH + L-alanine. Its function is as follows. Catalyzes the removal of elemental sulfur atoms from cysteine to produce alanine. Seems to participate in the biosynthesis of the nitrogenase metalloclusters by providing the inorganic sulfur required for the Fe-S core formation. This Klebsiella pneumoniae protein is Cysteine desulfurase.